The primary structure comprises 221 residues: Serine/arginine-rich splicing factor 9 (221 aa).

2 RRM domains span residues 14 to 89 (GRIY…FPRA) and 111 to 187 (FRVL…PERG). Residue K36 forms a Glycyl lysine isopeptide (Lys-Gly) (interchain with G-Cter in SUMO2) linkage. Over residues 187-198 (GTSYGCSRSRSG) the composition is skewed to low complexity. The interval 187–221 (GTSYGCSRSRSGSRGRDSPYQSRGSPHYFSPFRPY) is disordered. Positions 188–200 (TSYGCSRSRSGSR) are interaction with SAFB1. Residues S189, S193, S195, S204, S208, and S211 each carry the phosphoserine modification. A Phosphotyrosine modification is found at Y214. A Phosphoserine modification is found at S216.

This sequence belongs to the splicing factor SR family. In terms of assembly, interacts with KHDRBS3. Interacts with HABP4. Interacts with NOL3/ARC/NOP30. Interacts with NSEP1/YB-1/YB1. Interacts with SAFB/SAFB1. Interacts with SRSF6/SFRS6. Interacts with TRA2B/SFRS10. Interacts with C1QBP. May also interact with DUSP11/PIR1. Post-translationally, extensively phosphorylated on serine residues in the RS domain.

It localises to the nucleus. Its function is as follows. Plays a role in constitutive splicing and can modulate the selection of alternative splice sites. Represses the splicing of MAPT/Tau exon 10. The sequence is that of Serine/arginine-rich splicing factor 9 (Srsf9) from Rattus norvegicus (Rat).